Reading from the N-terminus, the 440-residue chain is Gamma-aminobutyric acid receptor subunit pi (440 aa).

The first 23 residues, 1–23 (MSYSLYLAFVCLNLLAQRMCIQG), serve as a signal peptide directing secretion. Topologically, residues 24-241 (NQFNVEVSRS…LVLQFELRRN (218 aa)) are extracellular. Residues asparagine 43, asparagine 102, and asparagine 145 are each glycosylated (N-linked (GlcNAc...) asparagine). An intrachain disulfide couples cysteine 160 to cysteine 174. 2 N-linked (GlcNAc...) asparagine glycosylation sites follow: asparagine 196 and asparagine 228. Residues 242-262 (VLYFILETYVPSTFLVVLSWV) traverse the membrane as a helical segment. Residues 263-270 (SFWISLES) are Cytoplasmic-facing. A helical membrane pass occupies residues 271–290 (VPARTCIGVTTVLSMTTLMI). Over 291 to 301 (GSRTSLPNTNC) the chain is Extracellular. The helical transmembrane segment at 302–322 (FIKAIDVYLGICFSFVFGALL) threads the bilayer. At 323–419 (EYAVAHYSSL…NPSNVDRYSK (97 aa)) the chain is on the cytoplasmic side. The chain crosses the membrane as a helical span at residues 420-440 (LLFPLIFMLANVFYWAYYMYF).

This sequence belongs to the ligand-gated ion channel (TC 1.A.9) family. Gamma-aminobutyric acid receptor (TC 1.A.9.5) subfamily. GABRP sub-subfamily. As to quaternary structure, heteropentamer, formed by a combination of alpha (GABRA1-6), beta (GABRB1-3), gamma (GABRG1-3), delta (GABRD), epsilon (GABRE), rho (GABRR1-3), pi (GABRP) and theta (GABRQ) chains, each subunit exhibiting distinct physiological and pharmacological properties. As to expression, expressed in lungs, in alveolar epithelium.

The protein localises to the cell membrane. It is found in the apical cell membrane. It catalyses the reaction chloride(in) = chloride(out). Its function is as follows. Pi subunit of the heteropentameric ligand-gated chloride channel gated by gamma-aminobutyric acid (GABA). GABA-gated chloride channels, also named GABA(A) receptors (GABAAR), consist of five subunits arranged around a central pore and contain GABA active binding site(s) located at the alpha and beta subunit interfaces. When activated by GABA, GABAARs selectively allow the flow of chloride anions across the cell membrane down their electrochemical gradient. Pi-containing GABAARs are mostly located in peripheral tissues. In the uterus, pi subunits modulate uterus contraction by altering the sensitivity of GABAARs to pregnanolone. In the lungs, pi-containing GABAARs contribute to pulmonary fluid transport via luminal secretion of chloride. The polypeptide is Gamma-aminobutyric acid receptor subunit pi (Rattus norvegicus (Rat)).